A 166-amino-acid polypeptide reads, in one-letter code: Small ribosomal subunit protein uS5 (166 aa).

The region spanning 11-74 (LQEKLIAVNR…EKARRNMKTV (64 aa)) is the S5 DRBM domain.

This sequence belongs to the universal ribosomal protein uS5 family. As to quaternary structure, part of the 30S ribosomal subunit. Contacts proteins S4 and S8.

With S4 and S12 plays an important role in translational accuracy. Its function is as follows. Located at the back of the 30S subunit body where it stabilizes the conformation of the head with respect to the body. This is Small ribosomal subunit protein uS5 from Photorhabdus laumondii subsp. laumondii (strain DSM 15139 / CIP 105565 / TT01) (Photorhabdus luminescens subsp. laumondii).